Consider the following 132-residue polypeptide: MDVTRLLLATLLVFLCFFTANSHLPPEEKLRDDRSLRSNSSVNLLDFPSVSIVALNKKSKQIGRKEAEKKRSSKKEASMKKVARPRTPLSAPCVATRNSCKPPAPACCDPCASCQCRFFRSACSCRVLSLNC.

The signal sequence occupies residues 1 to 22 (MDVTRLLLATLLVFLCFFTANS). N-linked (GlcNAc...) asparagine glycosylation occurs at N39. A disordered region spans residues 61-87 (QIGRKEAEKKRSSKKEASMKKVARPRT). The span at 63-79 (GRKEAEKKRSSKKEASM) shows a compositional bias: basic and acidic residues. Disulfide bonds link C93-C108, C100-C114, C107-C125, C111-C132, and C116-C123. The Agouti domain occupies 93 to 132 (CVATRNSCKPPAPACCDPCASCQCRFFRSACSCRVLSLNC).

The protein resides in the secreted. Its function is as follows. Involved in the regulation of melanogenesis. The binding of ASP to MC1R precludes alpha-MSH initiated signaling and thus blocks production of cAMP, leading to a down-regulation of eumelanogenesis (brown/black pigment) and thus increasing synthesis of pheomelanin (yellow/red pigment). This Gorilla gorilla gorilla (Western lowland gorilla) protein is Agouti-signaling protein (ASIP).